The following is a 185-amino-acid chain: Ribosome-recycling factor (185 aa).

It belongs to the RRF family.

It is found in the cytoplasm. Responsible for the release of ribosomes from messenger RNA at the termination of protein biosynthesis. May increase the efficiency of translation by recycling ribosomes from one round of translation to another. This chain is Ribosome-recycling factor, found in Pasteurella multocida (strain Pm70).